The chain runs to 128 residues: MIQVLLVIICLAVFPYQGSSIILESGNVNDYEIVYPKKVTVLPTGAMNSAHPCCDPVTCKPKRGEHCISGPCCRNCKFLNAGTICKRGRGDSLHDYCTGVTPDCPRNPNKGESDELEWSAAATGSVLM.

An N-terminal signal peptide occupies residues 1–20; it reads MIQVLLVIICLAVFPYQGSS. The propeptide occupies 21–47; it reads IILESGNVNDYEIVYPKKVTVLPTGAM. In terms of domain architecture, Disintegrin spans 47-112; it reads MNSAHPCCDP…DCPRNPNKGE (66 aa). 4 cysteine pairs are disulfide-bonded: Cys53-Cys76, Cys67-Cys73, Cys72-Cys97, and Cys85-Cys104. Residues 89–91 carry the Cell attachment site motif; that stretch reads RGD. The tract at residues 108-128 is disordered; the sequence is PNKGESDELEWSAAATGSVLM.

This sequence belongs to the disintegrin family. Dimeric disintegrin subfamily. In terms of assembly, heterodimer with bitisgabonin (bitisgabonin-1 is the name of the heterodimer); disulfide-linked. As to expression, expressed by the venom gland.

It localises to the secreted. Functionally, the heterodimer bitisgabonin-1 is a potent inhibitor of the adhesion of the RGD-dependent integrin alpha-5/beta-1 (ITGA5/ITGB1) to immobilized fibronectin. The polypeptide is Disintegrin gabonin-1 (Bitis gabonica (Gaboon adder)).